The chain runs to 105 residues: Large ribosomal subunit protein uL24 (105 aa).

It belongs to the universal ribosomal protein uL24 family. As to quaternary structure, part of the 50S ribosomal subunit.

Functionally, one of two assembly initiator proteins, it binds directly to the 5'-end of the 23S rRNA, where it nucleates assembly of the 50S subunit. Its function is as follows. One of the proteins that surrounds the polypeptide exit tunnel on the outside of the subunit. This chain is Large ribosomal subunit protein uL24, found in Psychrobacter arcticus (strain DSM 17307 / VKM B-2377 / 273-4).